Here is a 116-residue protein sequence, read N- to C-terminus: Probable transcriptional regulator WhiB6 (116 aa).

4 residues coordinate [4Fe-4S] cluster: cysteine 12, cysteine 53, cysteine 56, and cysteine 62. A 4Fe-4S Wbl-type domain is found at 33–86 (VCTQDPDRWTTTPDDEAKTLCRACPRRWLCARDAVESAGAEGLWAGVVIPESGR).

The protein belongs to the WhiB family. [4Fe-4S] cluster is required as a cofactor. In terms of processing, the Fe-S cluster can be nitrosylated by nitric oxide (NO). Post-translationally, upon Fe-S cluster removal intramolecular disulfide bonds are formed.

It localises to the cytoplasm. Acts as a transcriptional regulator. Probably redox-responsive. The apo- but not holo-form probably binds DNA. The polypeptide is Probable transcriptional regulator WhiB6 (whiB6) (Mycobacterium tuberculosis (strain CDC 1551 / Oshkosh)).